Consider the following 309-residue polypeptide: Probable manganese-dependent inorganic pyrophosphatase (309 aa).

Mn(2+) contacts are provided by His9, Asp13, Asp15, Asp75, His97, and Asp149.

This sequence belongs to the PPase class C family. Requires Mn(2+) as cofactor.

The protein resides in the cytoplasm. The catalysed reaction is diphosphate + H2O = 2 phosphate + H(+). In Exiguobacterium sp. (strain ATCC BAA-1283 / AT1b), this protein is Probable manganese-dependent inorganic pyrophosphatase.